The primary structure comprises 123 residues: Double-stranded DNA deaminase immunity protein (123 aa).

In terms of assembly, the toxic domain forms a 1:1 complex with the DddI immunity protein. This protein blocks the active site of the toxin.

Immunity protein component of a toxin-immunity protein module, which functions as a cellular contact-dependent growth inhibition (CDI) system. CDI modules allow bacteria to communicate with and inhibit the growth of closely related neighboring bacteria in a contact-dependent fashion. Bacteria that have this module inhibit or kill bacteria without it, giving them a growth advantage. Specifically inhibits the toxic activity of cognate toxin DddA (C-terminal 163 residue fragment) upon expression in E.coli. This chain is Double-stranded DNA deaminase immunity protein, found in Burkholderia cenocepacia (strain H111).